The chain runs to 373 residues: MANTTGEPEEVSGALSPPSAVAYVKLVLLGLIMCVSLAGNAILSLLVLKDRALHKAPYYFLLDLCLADGIRSAVCFPFVLASVRHGSSWTFSALSCKIVAFMAVLFCFHAAFMLFCISVTRYMAIAHHRFYAKRMTLWTCAAVICMAWTLSVAMAFPPVFDVGTYKFIREEDQCIFEHRYFKANDTLGFMLMLAVLMAATHAVYGKLLLFEYRHRKMKPVQMVPAISQNWTFHGPGATGQAAANWIAGFGRGPMPPTLLGIRQNGHAASRRLLGMDEVKGEKQLGRMFYAITLLFLLLWSPYIVACYWRVFVKACAVPHRYLATAVWMSFAQAAVNPIVCFLLNKDLKKCLRTHAPCWGTGGAPAPREPYCVM.

The Extracellular portion of the chain corresponds to 1–26; that stretch reads MANTTGEPEEVSGALSPPSAVAYVKL. Asparagine 3 carries N-linked (GlcNAc...) asparagine glycosylation. The chain crosses the membrane as a helical span at residues 27–47; it reads VLLGLIMCVSLAGNAILSLLV. The Cytoplasmic segment spans residues 48–59; it reads LKDRALHKAPYY. The chain crosses the membrane as a helical span at residues 60-80; sequence FLLDLCLADGIRSAVCFPFVL. The Extracellular portion of the chain corresponds to 81–97; it reads ASVRHGSSWTFSALSCK. Cysteine 96 and cysteine 174 are disulfide-bonded. A helical transmembrane segment spans residues 98-118; sequence IVAFMAVLFCFHAAFMLFCIS. At 119–139 the chain is on the cytoplasmic side; the sequence is VTRYMAIAHHRFYAKRMTLWT. Residues 140–160 form a helical membrane-spanning segment; that stretch reads CAAVICMAWTLSVAMAFPPVF. Over 161 to 188 the chain is Extracellular; sequence DVGTYKFIREEDQCIFEHRYFKANDTLG. N-linked (GlcNAc...) asparagine glycosylation is present at asparagine 184. Residues 189-209 form a helical membrane-spanning segment; sequence FMLMLAVLMAATHAVYGKLLL. Topologically, residues 210–287 are cytoplasmic; the sequence is FEYRHRKMKP…VKGEKQLGRM (78 aa). Residues 288–308 traverse the membrane as a helical segment; it reads FYAITLLFLLLWSPYIVACYW. At 309–322 the chain is on the extracellular side; sequence RVFVKACAVPHRYL. The chain crosses the membrane as a helical span at residues 323–343; the sequence is ATAVWMSFAQAAVNPIVCFLL. Residues 344 to 373 lie on the Cytoplasmic side of the membrane; it reads NKDLKKCLRTHAPCWGTGGAPAPREPYCVM.

It belongs to the G-protein coupled receptor 1 family.

It is found in the cell membrane. Is a receptor for the SMIM20 derived peptides Phoenixin-14 and Phoenixin-20. It mediates the Phoenixin-14 and Phoenixin-20 augmentation of gonadotropin-releasing hormone (GNRH) signaling in the hypothalamus and pituitary gland. In the ovary, it mediates the effects of Phoenixin-14 and Phoenixin-20 induced granulosa cell proliferation during follicular growth. This chain is Probable G-protein coupled receptor 173 (GPR173), found in Bos taurus (Bovine).